Reading from the N-terminus, the 216-residue chain is Large ribosomal subunit protein uL1 (216 aa).

It belongs to the universal ribosomal protein uL1 family. As to quaternary structure, component of the large ribosomal subunit.

It is found in the cytoplasm. Its function is as follows. Component of the large ribosomal subunit. The ribosome is a large ribonucleoprotein complex responsible for the synthesis of proteins in the cell. The protein is Large ribosomal subunit protein uL1 (rpl10a) of Ictalurus punctatus (Channel catfish).